A 475-amino-acid polypeptide reads, in one-letter code: Ribulose bisphosphate carboxylase large chain (475 aa).

Residues Met1 to Ser2 constitute a propeptide that is removed on maturation. Pro3 is subject to N-acetylproline. Lys14 is subject to N6,N6,N6-trimethyllysine. Substrate contacts are provided by Asn123 and Thr173. Lys175 (proton acceptor) is an active-site residue. Lys177 is a binding site for substrate. Positions 201, 203, and 204 each coordinate Mg(2+). The residue at position 201 (Lys201) is an N6-carboxylysine. The Proton acceptor role is filled by His294. The substrate site is built by His327 and Ser379.

The protein belongs to the RuBisCO large chain family. Type I subfamily. As to quaternary structure, heterohexadecamer of 8 large chains and 8 small chains; disulfide-linked. The disulfide link is formed within the large subunit homodimers. Requires Mg(2+) as cofactor. Post-translationally, the disulfide bond which can form in the large chain dimeric partners within the hexadecamer appears to be associated with oxidative stress and protein turnover.

It localises to the plastid. Its subcellular location is the chloroplast. It carries out the reaction 2 (2R)-3-phosphoglycerate + 2 H(+) = D-ribulose 1,5-bisphosphate + CO2 + H2O. The catalysed reaction is D-ribulose 1,5-bisphosphate + O2 = 2-phosphoglycolate + (2R)-3-phosphoglycerate + 2 H(+). RuBisCO catalyzes two reactions: the carboxylation of D-ribulose 1,5-bisphosphate, the primary event in carbon dioxide fixation, as well as the oxidative fragmentation of the pentose substrate in the photorespiration process. Both reactions occur simultaneously and in competition at the same active site. In Amaranthus hypochondriacus (Prince-of-Wales feather), this protein is Ribulose bisphosphate carboxylase large chain.